The chain runs to 615 residues: DNA mismatch repair protein MutL (615 aa).

The disordered stretch occupies residues 363–397; the sequence is FAEPAAREPVAPRYTPAPASGSRPAAPWPNAQPGY. Over residues 364–391 the composition is skewed to low complexity; the sequence is AEPAAREPVAPRYTPAPASGSRPAAPWP.

Belongs to the DNA mismatch repair MutL/HexB family.

This protein is involved in the repair of mismatches in DNA. It is required for dam-dependent methyl-directed DNA mismatch repair. May act as a 'molecular matchmaker', a protein that promotes the formation of a stable complex between two or more DNA-binding proteins in an ATP-dependent manner without itself being part of a final effector complex. In Escherichia coli O9:H4 (strain HS), this protein is DNA mismatch repair protein MutL.